The primary structure comprises 439 residues: GTPase Obg (439 aa).

One can recognise an Obg domain in the interval 5-164; it reads TDFFDQATIV…LTLELELKML (160 aa). Residues 165–335 form the OBG-type G domain; the sequence is ADVGLVGFPN…LLRRVADLLR (171 aa). GTP is bound by residues 171 to 178, 196 to 200, 217 to 220, 287 to 290, and 316 to 318; these read GFPNAGKS, FTTLT, DIPG, NKAD, and SAA. Mg(2+) contacts are provided by S178 and T198. The OCT domain occupies 356–433; sequence LPEVDENAFT…IGRAELVWDD (78 aa).

This sequence belongs to the TRAFAC class OBG-HflX-like GTPase superfamily. OBG GTPase family. As to quaternary structure, monomer. It depends on Mg(2+) as a cofactor.

The protein resides in the cytoplasm. Functionally, an essential GTPase which binds GTP, GDP and possibly (p)ppGpp with moderate affinity, with high nucleotide exchange rates and a fairly low GTP hydrolysis rate. Plays a role in control of the cell cycle, stress response, ribosome biogenesis and in those bacteria that undergo differentiation, in morphogenesis control. The chain is GTPase Obg from Chloroflexus aurantiacus (strain ATCC 29364 / DSM 637 / Y-400-fl).